A 473-amino-acid chain; its full sequence is Membrane protein TMS1 (473 aa).

Over 1 to 6 the chain is Cytoplasmic; that stretch reads MGAVIS. The chain crosses the membrane as a helical span at residues 7–29; it reads LPVSMAGSFVASCFGGCCSNLVT. Residues 30-38 lie on the Vacuolar side of the membrane; it reads KTASSLGSS. Residues 39–61 traverse the membrane as a helical segment; sequence SLGTRLLYAVWLLLNSLISWVSY. The Cytoplasmic segment spans residues 62–81; that stretch reads SANKSILWPGKTCTGTGECG. A helical membrane pass occupies residues 82-104; sequence FFTVHRLNFALGCLHLILALVLT. Residues 105 to 118 lie on the Vacuolar side of the membrane; it reads GVKSTNDVRAALQN. The helical transmembrane segment at 119–138 threads the bilayer; it reads SWWSLKFILYLCLIVLSFVI. The Cytoplasmic portion of the chain corresponds to 139–144; that stretch reads PNDFYI. Residues 145-167 traverse the membrane as a helical segment; that stretch reads FFSKWVSVPSGAIFILVGLILLV. The Vacuolar portion of the chain corresponds to 168 to 194; it reads DFAHEWAETCISHVESEDEDSSFWQRF. The chain crosses the membrane as a helical span at residues 195–217; it reads LVLGTTSMYTASIIMTVVMYVMF. Over 218–228 the chain is Cytoplasmic; sequence CHQQCNMNQTA. The chain crosses the membrane as a helical span at residues 229 to 246; it reads VTVNLILTVITLVLSVNP. Over 247 to 295 the chain is Vacuolar; it reads KIQEANPKSGLAQSSMVSVYCTYLTMSAMSSEPDDKMCNPLVRSSGTRK. A helical membrane pass occupies residues 296–318; it reads FSIILGSLFTFIAIAYTTTRAAA. At 319–398 the chain is on the cytoplasmic side; the sequence is NSAFQGTNTN…DDERTGTKYN (80 aa). A helical transmembrane segment spans residues 399–421; the sequence is YTLFHVIFFLATQWIAILLTINV. Over 422 to 435 the chain is Vacuolar; that stretch reads TQDDVGDFIPVGRT. A helical transmembrane segment spans residues 436–458; the sequence is YFYSWVKIVSAWICYALYGWTVV. Over 459–473 the chain is Cytoplasmic; it reads APAIMPDRFDYENYY.

It belongs to the TDE1 family.

The protein localises to the membrane. In Saccharomyces cerevisiae (strain ATCC 204508 / S288c) (Baker's yeast), this protein is Membrane protein TMS1 (TMS1).